The following is a 208-amino-acid chain: Guanylate kinase (208 aa).

The Guanylate kinase-like domain maps to 3–181; sequence GSLFIITAAS…ALTELKAIIV (179 aa). Residue 10-17 coordinates ATP; sequence AASGTGKT.

The protein belongs to the guanylate kinase family.

It is found in the cytoplasm. The enzyme catalyses GMP + ATP = GDP + ADP. In terms of biological role, essential for recycling GMP and indirectly, cGMP. This is Guanylate kinase from Psychrobacter arcticus (strain DSM 17307 / VKM B-2377 / 273-4).